We begin with the raw amino-acid sequence, 263 residues long: uncharacterized protein (263 aa).

Positions 22-44 are disordered; that stretch reads IDGSDDQSDRTRSSSGDSTSNSL. A compositionally biased stretch (low complexity) spans 34–43; sequence SSSGDSTSNS.

The protein resides in the mitochondrion. This is an uncharacterized protein from Schizosaccharomyces pombe (strain 972 / ATCC 24843) (Fission yeast).